We begin with the raw amino-acid sequence, 217 residues long: Adenylate kinase (217 aa).

Residue 10 to 15 coordinates ATP; that stretch reads GIGKGT. Positions 30–59 are NMP; sequence ATGDIFRKNFQENTPLGKESKKFINKGLLV. AMP is bound by residues threonine 31, arginine 36, 57–59, 85–88, and glutamine 92; these read LLV and GFPR. Residues 126–163 form an LID region; sequence GRRICSHCGKVYHLDNLPPKIEGICDKDQKKLIQREDD. Arginine 127 contributes to the ATP binding site. Zn(2+) is bound by residues cysteine 130 and cysteine 133. An ATP-binding site is contributed by 136–137; the sequence is VY. The Zn(2+) site is built by cysteine 150 and aspartate 153. Residues arginine 160 and arginine 171 each contribute to the AMP site. Glutamine 199 lines the ATP pocket.

It belongs to the adenylate kinase family. As to quaternary structure, monomer.

It localises to the cytoplasm. It catalyses the reaction AMP + ATP = 2 ADP. Its pathway is purine metabolism; AMP biosynthesis via salvage pathway; AMP from ADP: step 1/1. Its function is as follows. Catalyzes the reversible transfer of the terminal phosphate group between ATP and AMP. Plays an important role in cellular energy homeostasis and in adenine nucleotide metabolism. The sequence is that of Adenylate kinase from Phytoplasma australiense.